The sequence spans 411 residues: MTLLVTNIKELLQVREQNILKVSGSEMKELPTIKNAWLLIENDKIADFGTMKNMPKITADQTIDATGKIVLPTWCDSHTHIVYAGNREQEFADRINGLSYEEIANRGGGILNSVKTLQDTSEEEVYEQSAKRLKEVMKLGTGAVEIKSGYGLTEKAELKMLRVIKKLRENYDLPVKSTFLGAHAIPKEYKNDPDAYMDLVINEILPKVAKEGLAEYIDIFCEKGYFSIKDTHRLLSAAKEHGLKPKIHVNQFNSIGGVKVGVEHEALSVDHLEVMNDEDIEVLKGTRTMPVALPSCSLFLSIPYTPARKILDAELPLALATDFNPGSTPSGNMNLVVSLACIKMKMTPEEAINAATINGAYAMDLSETHGSITKGKMANFMITKEIPSFTFLPYAFGTNSIDSVYINGKLI.

2 residues coordinate Fe(3+): histidine 78 and histidine 80. Residues histidine 78 and histidine 80 each coordinate Zn(2+). Residues arginine 87, tyrosine 150, and histidine 183 each coordinate 4-imidazolone-5-propanoate. Residue tyrosine 150 participates in N-formimidoyl-L-glutamate binding. A Fe(3+)-binding site is contributed by histidine 248. Residue histidine 248 participates in Zn(2+) binding. Glutamine 251 serves as a coordination point for 4-imidazolone-5-propanoate. Aspartate 322 is a binding site for Fe(3+). A Zn(2+)-binding site is contributed by aspartate 322. Asparagine 324 and glycine 326 together coordinate N-formimidoyl-L-glutamate. Serine 327 contacts 4-imidazolone-5-propanoate.

This sequence belongs to the metallo-dependent hydrolases superfamily. HutI family. Requires Zn(2+) as cofactor. It depends on Fe(3+) as a cofactor.

It localises to the cytoplasm. It catalyses the reaction 4-imidazolone-5-propanoate + H2O = N-formimidoyl-L-glutamate. It functions in the pathway amino-acid degradation; L-histidine degradation into L-glutamate; N-formimidoyl-L-glutamate from L-histidine: step 3/3. Its function is as follows. Catalyzes the hydrolytic cleavage of the carbon-nitrogen bond in imidazolone-5-propanoate to yield N-formimidoyl-L-glutamate. It is the third step in the universal histidine degradation pathway. The polypeptide is Imidazolonepropionase (Christiangramia forsetii (strain DSM 17595 / CGMCC 1.15422 / KT0803) (Gramella forsetii)).